A 512-amino-acid polypeptide reads, in one-letter code: Ribonuclease Y (512 aa).

A helical transmembrane segment spans residues 2–22 (VGMYIIIPIVTFIIGGLLAWL). In terms of domain architecture, KH spans 202-262 (SITVFHIESD…VRREIARLAL (61 aa)). The HD domain occupies 328–421 (LLQHARETAN…VQVCDAISGA (94 aa)).

The protein belongs to the RNase Y family.

The protein localises to the cell membrane. Its function is as follows. Endoribonuclease that initiates mRNA decay. The sequence is that of Ribonuclease Y from Parabacteroides distasonis (strain ATCC 8503 / DSM 20701 / CIP 104284 / JCM 5825 / NCTC 11152).